The sequence spans 543 residues: Chaperonin GroEL (543 aa).

ATP contacts are provided by residues 31–34 (TMGP), 88–92 (DGTTT), G415, 479–481 (DAL), and D495.

This sequence belongs to the chaperonin (HSP60) family. In terms of assembly, forms a cylinder of 14 subunits composed of two heptameric rings stacked back-to-back. Interacts with the co-chaperonin GroES.

The protein localises to the cytoplasm. The catalysed reaction is ATP + H2O + a folded polypeptide = ADP + phosphate + an unfolded polypeptide.. Its function is as follows. Together with its co-chaperonin GroES, plays an essential role in assisting protein folding. The GroEL-GroES system forms a nano-cage that allows encapsulation of the non-native substrate proteins and provides a physical environment optimized to promote and accelerate protein folding. The polypeptide is Chaperonin GroEL (Clostridium tetani (strain Massachusetts / E88)).